Here is a 194-residue protein sequence, read N- to C-terminus: Probable thymidylate kinase (194 aa).

An ATP-binding site is contributed by 9-16; the sequence is GIDGVGKS.

This sequence belongs to the thymidylate kinase family.

The enzyme catalyses dTMP + ATP = dTDP + ADP. The chain is Probable thymidylate kinase from Methanopyrus kandleri (strain AV19 / DSM 6324 / JCM 9639 / NBRC 100938).